A 217-amino-acid polypeptide reads, in one-letter code: LexA repressor (217 aa).

The H-T-H motif DNA-binding region spans 26–46 (FEEMKLALDLKSKSGIHRLIK). Residues serine 138 and lysine 176 each act as for autocatalytic cleavage activity in the active site.

It belongs to the peptidase S24 family. Homodimer.

The enzyme catalyses Hydrolysis of Ala-|-Gly bond in repressor LexA.. Represses a number of genes involved in the response to DNA damage (SOS response), including recA and lexA. In the presence of single-stranded DNA, RecA interacts with LexA causing an autocatalytic cleavage which disrupts the DNA-binding part of LexA, leading to derepression of the SOS regulon and eventually DNA repair. The sequence is that of LexA repressor from Zymomonas mobilis subsp. mobilis (strain ATCC 31821 / ZM4 / CP4).